A 77-amino-acid polypeptide reads, in one-letter code: P fimbrial regulatory protein KS71A (77 aa).

The sequence is that of P fimbrial regulatory protein KS71A (KS71A) from Escherichia coli.